Reading from the N-terminus, the 78-residue chain is Myrmicitoxin-Ta2a (78 aa).

The N-terminal stretch at 1–26 (MKLSFLSLALAIIFVTVLIYAPQAEA) is a signal peptide. Residues 27 to 56 (KALADAVADADADADAAADAVADALADADA) constitute a propeptide that is removed on maturation. Lys-77 is subject to Lysine amide.

The protein belongs to the formicidae venom precursor-01 superfamily. Expressed by the venom gland.

Its subcellular location is the secreted. Peptide with toxicity towards insects that may also act as antimicrobial peptide. Causes calcium influx in F11 cells (EC(50)=5.8 nM), possibly by modulating sodium channels (Nav). In vivo, is lethal to insects, but does not show toxicity to vertebrates. Intraplantar injection into mice does not induce spontaneous nocifensive behaviors up to a dose of 200 pmol. The chain is Myrmicitoxin-Ta2a from Tetramorium africanum (Fierce ant).